The following is a 210-amino-acid chain: Protein-methionine-sulfoxide reductase heme-binding subunit MsrQ (210 aa).

4 helical membrane passes run 15–35, 89–109, 122–142, and 160–180; these read DTLV…WLAW, LFAF…DLFF, PFIT…VTST, and LVYL…KADH.

Belongs to the MsrQ family. Heterodimer of a catalytic subunit (MsrP) and a heme-binding subunit (MsrQ). Requires FMN as cofactor. It depends on heme b as a cofactor.

The protein localises to the cell inner membrane. Functionally, part of the MsrPQ system that repairs oxidized periplasmic proteins containing methionine sulfoxide residues (Met-O), using respiratory chain electrons. Thus protects these proteins from oxidative-stress damage caused by reactive species of oxygen and chlorine generated by the host defense mechanisms. MsrPQ is essential for the maintenance of envelope integrity under bleach stress, rescuing a wide series of structurally unrelated periplasmic proteins from methionine oxidation. MsrQ provides electrons for reduction to the reductase catalytic subunit MsrP, using the quinone pool of the respiratory chain. This chain is Protein-methionine-sulfoxide reductase heme-binding subunit MsrQ, found in Caulobacter vibrioides (strain ATCC 19089 / CIP 103742 / CB 15) (Caulobacter crescentus).